A 912-amino-acid chain; its full sequence is Multiple C2 and transmembrane domain-containing protein (912 aa).

The segment covering methionine 1 to proline 33 has biased composition (low complexity). 2 disordered regions span residues methionine 1–lysine 80 and serine 145–serine 165. Residues proline 38–arginine 49 are compositionally biased toward polar residues. C2 domains follow at residues glutamine 218–leucine 337, arginine 371–leucine 493, and glutamate 522–aspartate 637. Aspartate 252, aspartate 258, aspartate 305, aspartate 307, and aspartate 313 together coordinate Ca(2+). Positions 553, 559, 605, and 607 each coordinate Ca(2+). 2 helical membrane passes run isoleucine 729–leucine 749 and leucine 826–leucine 846. The disordered stretch occupies residues asparagine 887–serine 912.

The cofactor is Ca(2+). As to expression, motor neurons (at protein level).

The protein resides in the endoplasmic reticulum membrane. Functionally, calcium sensor which is essential for the stabilization of normal baseline neurotransmitter release and for the induction and long-term maintenance of presynaptic homeostatic plasticity. In Drosophila melanogaster (Fruit fly), this protein is Multiple C2 and transmembrane domain-containing protein.